The chain runs to 788 residues: MDVSGQETDWRSTAFRQKLVSQIEDAMRKAGVAHSKSSKDMESHVFLKAKTRDEYLSLVARLIIHFRDIHNKKSQASVSDPMNALQSLTGGPAAGAAGIGMPPRGPGQSLGGMGSLGAMGQPMSLSGQPPPGTSGMAPHSMAVVSTATPQTQLQLQQVALQQQQQQQQFQQQQQAALQQQQQQQQQQQFQAQQSAMQQQFQAVVQQQQQLQQQQQQQQHLIKLHHQNQQQIQQQQQQLQRIAQLQLQQQQQQQQQQQQQQQQALQAQPPIQQPPMQQPQPPPSQALPQQLQQMHHTQHHQPPPQPQQPPVAQNQPSQLPPQSQTQPLVSQAQALPGQMLYTQPPLKFVRAPMVVQQPPVQPQVQQQQTAVQTAQAAQMVAPGVQMITEALAQGGMHIRARFPPTTAVSAIPSSSIPLGRQPMAQVSQSSLPMLSSPSPGQQVQTPQSMPPPPQPSPQPGQPSSQPNSNVSSGPAPSPSSFLPSPSPQPSQSPVTARTPQNFSVPSPGPLNTPVNPSSVMSPAGSSQAEEQQYLDKLKQLSKYIEPLRRMINKIDKNEDRKKDLSKMKSLLDILTDPSKRCPLKTLQKCEIALEKLKNDMAVPTPPPPPVPPTKQQYLCQPLLDAVLANIRSPVFNHSLYRTFVPAMTAIHGPPITAPVVCTRKRRLEDDERQSIPSVLQGEVARLDPKFLVNLDPSHCSNNGTVHLICKLDDKDLPSVPPLELSVPADYPAQSPLWIDRQWQYDANPFLQSVHRCMTSRLLQLPDKHSVTALLNTWAQSVHQACLSAA.

Residues 9 to 73 (DWRSTAFRQK…IHFRDIHNKK (65 aa)) are interaction with SREBF1. 2 disordered regions span residues 95–139 (GAAG…MAPH) and 260–329 (QQQA…PLVS). Residues 108 to 117 (QSLGGMGSLG) are compositionally biased toward gly residues. Positions 260–269 (QQQALQAQPP) are enriched in low complexity. Pro residues predominate over residues 270-284 (IQQPPMQQPQPPPSQ). Low complexity-rich tracts occupy residues 285 to 294 (ALPQQLQQMH) and 309 to 329 (PVAQ…PLVS). R349 carries the asymmetric dimethylarginine modification. Positions 412–530 (SSSIPLGRQP…PAGSSQAEEQ (119 aa)) are disordered. A compositionally biased stretch (low complexity) spans 426-446 (SQSSLPMLSSPSPGQQVQTPQ). Residues 447-459 (SMPPPPQPSPQPG) show a composition bias toward pro residues. A compositionally biased stretch (low complexity) spans 460–482 (QPSSQPNSNVSSGPAPSPSSFLP). Composition is skewed to polar residues over residues 493-503 (VTARTPQNFSV) and 511-529 (TPVN…QAEE). The Nuclear localization signal signature appears at 547 to 564 (RRMINKIDKNEDRKKDLS). Phosphothreonine is present on T603.

The protein belongs to the Mediator complex subunit 15 family. In terms of assembly, component of the Mediator complex, which is composed of MED1, MED4, MED6, MED7, MED8, MED9, MED10, MED11, MED12, MED13, MED13L, MED14, MED15, MED16, MED17, MED18, MED19, MED20, MED21, MED22, MED23, MED24, MED25, MED26, MED27, MED29, MED30, MED31, CCNC, CDK8 and CDC2L6/CDK11. The MED12, MED13, CCNC and CDK8 subunits form a distinct module termed the CDK8 module. Mediator containing the CDK8 module is less active than Mediator lacking this module in supporting transcriptional activation. Individual preparations of the Mediator complex lacking one or more distinct subunits have been variously termed ARC, CRSP, DRIP, PC2, SMCC and TRAP. Interacts with SMAD2, SMAD3, SREBF1 and SREBF2. Interacts with WWTR1. Interacts with TRIM11. In terms of processing, ubiquitinated by TRIM11, leading to proteasomal degradation. In terms of tissue distribution, expressed in all tissues examined, including heart, brain, lung, spleen, thymus, pancreas, blood leukocyte and placenta. However, the level of expression varied, with highest expression in the placenta and peripheral blood and lowest in the pancreas and kidney.

It is found in the cytoplasm. The protein resides in the nucleus. Its function is as follows. Component of the Mediator complex, a coactivator involved in the regulated transcription of nearly all RNA polymerase II-dependent genes. Mediator functions as a bridge to convey information from gene-specific regulatory proteins to the basal RNA polymerase II transcription machinery. Mediator is recruited to promoters by direct interactions with regulatory proteins and serves as a scaffold for the assembly of a functional preinitiation complex with RNA polymerase II and the general transcription factors. Required for cholesterol-dependent gene regulation. Positively regulates the Nodal signaling pathway. In Homo sapiens (Human), this protein is Mediator of RNA polymerase II transcription subunit 15 (MED15).